Here is a 453-residue protein sequence, read N- to C-terminus: DNA repair protein RadA (453 aa).

The C4-type zinc-finger motif lies at 10-27; that stretch reads CQECGYQSPKYLGRCPNC. An ATP-binding site is contributed by 95-102; the sequence is GDPGIGKS. The short motif at 251–255 is the RadA KNRFG motif element; that stretch reads KNRFG. The segment at 350 to 453 is lon-protease-like; that stretch reads DAYLKSAGGV…VGQVLKAVFS (104 aa).

Belongs to the RecA family. RadA subfamily.

Functionally, DNA-dependent ATPase involved in processing of recombination intermediates, plays a role in repairing DNA breaks. Stimulates the branch migration of RecA-mediated strand transfer reactions, allowing the 3' invading strand to extend heteroduplex DNA faster. Binds ssDNA in the presence of ADP but not other nucleotides, has ATPase activity that is stimulated by ssDNA and various branched DNA structures, but inhibited by SSB. Does not have RecA's homology-searching function. In Streptococcus pyogenes serotype M6 (strain ATCC BAA-946 / MGAS10394), this protein is DNA repair protein RadA.